Consider the following 226-residue polypeptide: Ribosomal RNA small subunit methyltransferase G (226 aa).

Residues Gly-95, Leu-100, 146 to 147, and Arg-159 each bind S-adenosyl-L-methionine; that span reads VE.

This sequence belongs to the methyltransferase superfamily. RNA methyltransferase RsmG family.

It localises to the cytoplasm. It carries out the reaction guanosine(527) in 16S rRNA + S-adenosyl-L-methionine = N(7)-methylguanosine(527) in 16S rRNA + S-adenosyl-L-homocysteine. In terms of biological role, specifically methylates the N7 position of guanine in position 527 of 16S rRNA. The protein is Ribosomal RNA small subunit methyltransferase G of Acidovorax sp. (strain JS42).